A 183-amino-acid chain; its full sequence is ATP synthase subunit b, chloroplastic (183 aa).

The chain crosses the membrane as a helical span at residues 28 to 48 (DIFEANVINILLLLFGLIYVL).

The protein belongs to the ATPase B chain family. As to quaternary structure, F-type ATPases have 2 components, F(1) - the catalytic core - and F(0) - the membrane proton channel. F(1) has five subunits: alpha(3), beta(3), gamma(1), delta(1), epsilon(1). F(0) has four main subunits: a(1), b(1), b'(1) and c(10-14). The alpha and beta chains form an alternating ring which encloses part of the gamma chain. F(1) is attached to F(0) by a central stalk formed by the gamma and epsilon chains, while a peripheral stalk is formed by the delta, b and b' chains.

The protein resides in the plastid. It is found in the chloroplast thylakoid membrane. Its function is as follows. F(1)F(0) ATP synthase produces ATP from ADP in the presence of a proton or sodium gradient. F-type ATPases consist of two structural domains, F(1) containing the extramembraneous catalytic core and F(0) containing the membrane proton channel, linked together by a central stalk and a peripheral stalk. During catalysis, ATP synthesis in the catalytic domain of F(1) is coupled via a rotary mechanism of the central stalk subunits to proton translocation. Component of the F(0) channel, it forms part of the peripheral stalk, linking F(1) to F(0). The protein is ATP synthase subunit b, chloroplastic of Pyropia yezoensis (Susabi-nori).